Reading from the N-terminus, the 150-residue chain is MIIEEIVGNIANFSDSEKGKHMEKVYLENSDLVKRIQRVTTDHGNEIGIRLKQPIDLQYGDILYKDDKNMIVVDVNSEDLLVIKPRTLQEMGDIAHQLGNRHLPAQFTETEMLVQYDYLVESLLKDLGIPYEHEDRKVNKAFRHIGHSHD.

This sequence belongs to the UreE family.

Its subcellular location is the cytoplasm. In terms of biological role, involved in urease metallocenter assembly. Binds nickel. Probably functions as a nickel donor during metallocenter assembly. The protein is Urease accessory protein UreE of Staphylococcus saprophyticus subsp. saprophyticus (strain ATCC 15305 / DSM 20229 / NCIMB 8711 / NCTC 7292 / S-41).